Reading from the N-terminus, the 507-residue chain is Tryptamine 4-monooxygenase (507 aa).

The signal sequence occupies residues 1–19; sequence MIVLLVSLVLAGCIYYANA. Residues 403-425 form a disordered region; it reads PNPSEFRPERYLSSDGKPDPTVR. Basic and acidic residues predominate over residues 408 to 425; that stretch reads FRPERYLSSDGKPDPTVR. Cys-439 is a heme binding site.

The protein belongs to the cytochrome P450 family. Heme serves as cofactor.

It carries out the reaction tryptamine + AH2 + O2 = 4-hydroxytryptamine + A + H2O. It functions in the pathway secondary metabolite biosynthesis. Functionally, tryptamine 4-monooxygenase; part of the gene cluster that mediates the biosynthesis of psilocybin, a psychotropic tryptamine-derived natural product. The first step in the pathway is the decarboxylation of L-tryptophan to tryptamine by the decarboxylase psiD. PsiD does not decarboxylate phenylalanine, tyrosine, or 5-hydroxy- L -tryptophan (5-HTP). 4-hydroxy-L-tryptophan is accepted as substrate by psiD as well. The cytochrome P450 monooxygenase psiH then converts tryptamine to 4-hydroxytryptamine. The kinase psiK catalyzes the 4-O-phosphorylation step by converting 4-hydroxytryptamine into norbaeocystin. The methyltransferase psiM then catalyzes iterative methyl transfer to the amino group of norbaeocystin to yield psilocybin via a monomethylated intermediate, baeocystin. This Psilocybe cyanescens protein is Tryptamine 4-monooxygenase.